We begin with the raw amino-acid sequence, 286 residues long: Phycobilisome 32.1 kDa linker polypeptide, phycocyanin-associated, rod (286 aa).

A PBS-linker domain is found at 2-180 (AITAAASRLG…LYRGYANSDR (179 aa)). One can recognise a CpcD-like domain in the interval 234–286 (DRVYRIEVTGVRSPGYPSVRRSSYAIIVPYERLSEKIQQIHKLGGKIVSITSA).

The protein belongs to the phycobilisome linker protein family.

It is found in the cellular thylakoid membrane. Its function is as follows. Rod linker protein, associated with phycocyanin. Linker polypeptides determine the state of aggregation and the location of the disk-shaped phycobiliprotein units within the phycobilisome and modulate their spectroscopic properties in order to mediate a directed and optimal energy transfer. The protein is Phycobilisome 32.1 kDa linker polypeptide, phycocyanin-associated, rod (cpcC) of Mastigocladus laminosus (Fischerella sp.).